The primary structure comprises 81 residues: Protein PYP1 (81 aa).

Residues 1-25 constitute a chloroplast transit peptide; that stretch reads MAFVSGFTGMPVTARVSKAVCRTRM. The tract at residues 27-57 is disordered; sequence LEGGKSSGGGEATRDPEPTAVDPNDPKGKQQ.

The protein resides in the plastid. It is found in the chloroplast. The sequence is that of Protein PYP1 from Pyropia yezoensis (Susabi-nori).